The sequence spans 373 residues: Lipoyl amidotransferase LIPT1, mitochondrial (373 aa).

Residues 1–25 constitute a mitochondrion transit peptide; it reads MLIPFSMKNCFQLLCNCQVPAAGFK. The BPL/LPL catalytic domain maps to 57–243; the sequence is LEGKPILFFW…EYAAYHQIDN (187 aa). The (R)-lipoyl-5'-AMP site is built by Y107, R151, K161, and T179.

It belongs to the LplA family. As to expression, highly expressed in skeletal muscle and heart, moderately in kidney and pancreas, and detected at lower levels in liver, brain, placenta and lung.

The protein resides in the mitochondrion. It catalyses the reaction N(6)-[(R)-lipoyl]-L-lysyl-[glycine-cleavage complex H protein] + L-lysyl-[lipoyl-carrier protein] = L-lysyl-[glycine-cleavage complex H protein] + N(6)-[(R)-lipoyl]-L-lysyl-[lipoyl-carrier protein]. The catalysed reaction is (R)-lipoyl-5'-AMP + L-lysyl-[lipoyl-carrier protein] = N(6)-[(R)-lipoyl]-L-lysyl-[lipoyl-carrier protein] + AMP + 2 H(+). The protein operates within protein modification; protein lipoylation via exogenous pathway; protein N(6)-(lipoyl)lysine from lipoate: step 2/2. Lipoyl amidotransferase that catalyzes the transfer of lipoyl moieties from lipoyl-protein H of the glycine cleavage system (lipoyl-GCSH) to E2 subunits of the pyruvate dehydrogenase complex (PDCE2). Unable to catalyze the transfer of octanoyl from octanoyl-GCSH to PDCE2. In vitro, it is also able to catalyze the transfer of the lipoyl group from lipoyl-AMP to the specific lysine residue of lipoyl domains of lipoate-dependent enzymes but this reaction may not be physiologically relevant. This chain is Lipoyl amidotransferase LIPT1, mitochondrial, found in Homo sapiens (Human).